The following is a 547-amino-acid chain: Cytochrome P450 monooxygenase cpsD (547 aa).

Residues 18 to 38 form a helical membrane-spanning segment; the sequence is LTGAALVVTLITSVIIVAADL. Heme is bound at residue C476. Residues 528–547 form a disordered region; sequence RRRDARRTHEALGSKLKPEE. Over residues 534–547 the composition is skewed to basic and acidic residues; sequence RTHEALGSKLKPEE.

Belongs to the cytochrome P450 family. It depends on heme as a cofactor.

The protein resides in the membrane. It catalyses the reaction campesine B + campesine C + reduced [NADPH--hemoprotein reductase] + O2 = campesine D + oxidized [NADPH--hemoprotein reductase] + 2 H2O + 2 H(+). The catalysed reaction is 2 campesine B + reduced [NADPH--hemoprotein reductase] + O2 = campesine F + oxidized [NADPH--hemoprotein reductase] + 2 H2O + H(+). The enzyme catalyses campesine C + campesine A + reduced [NADPH--hemoprotein reductase] + O2 = campesine E + oxidized [NADPH--hemoprotein reductase] + 2 H2O + 2 H(+). It functions in the pathway alkaloid biosynthesis. Functionally, cytochrome P450 monooxygenase; part of the gene cluster that mediates the biosynthesis of campesine G, a dimeric indole piperazine alkaloid that shows good insecticidal activity Galleria mellonella. Within the pathway, cpsD acts as a dimerase that simultaneously catalyzes one C-C bond (C3-C3') and two C-N bonds (C2-N16' and C2'-N16) coupling reactions between campesines B and C to produce a heterodimer with unexpected 6/5/6/6/6/6/5/6 eight-ring scaffold called campesine D. CpsD is also able to catalyze oxidative heterocoupling od campesines A with B to produce campesine F and campesines A with C to produce campesine E. The non-canonical non-ribosomal peptide synthetase cpsA catalyzes the first steps of the pathway by producing L-tryptophanal and L-valinal from their respective amino-acids. These products condensate spontaneously to form trypyl-valyl pyrazine also known as didehydrocampesine A. The NmrA-like family domain-containing oxidoreductase cpsB is the next enzyme in cps pathway and reduces the unstable didehydrocampesine A to campesine A. The methyltransferase cpsF and the acetyltransferase cpsE both recognize N13 of piperazine ring to carry out methylation and acetylation of campesine A to produce campesine C and B, respectively. The cytochrome P450 monooxygenase cpsD then acts as a dimerase that catalyzes oxidative heterocoupling between campesine B and C to produce heterodimers with unexpected 6/5/6/6/6/6/5/6 eight-ring scaffold called campesine D. Finally,the cytochrome P450 monooxygenase cpsC is a regioselective dehydrogenase that catalyzes dehydrogenation reaction towards C2-N1 to produce campesine G. This Aspergillus campestris (strain IBT 28561) protein is Cytochrome P450 monooxygenase cpsD.